A 377-amino-acid chain; its full sequence is MSTQDSDSIGIVSARRAHFDTPLSLKSGAVLDSYELVYETYGELNADRSNAVLICHALSGNHHVAGVYADNPKNTGWWNNMIGPGKPVDTRKFFVIGINNLGGCHGSTGPISINDKTGKRFGPDFPLVTTADWAKTYVRFADQFSIDCFAAVIGGSLGGMSAMQLALDAPERVRHAIVVAASARLTAQNIAFNDVARQAILTDPDFHDGDYYSHGTHPRRGLRLARMLGHITYLSDDSMASKFGRELRNGSLAFNYDVEFQIESYLHHQGDKFADLFDANTYLLMTKALDYFDPAQDYDGNLSAAFARAQADFLVLSFTSDWRFSPERSRDIVKALLDNKLNVSYAEIPSSYGHDSFLMQDDYYHQLIRAYMNNIAL.

The AB hydrolase-1 domain occupies 50 to 358 (NAVLICHALS…PSSYGHDSFL (309 aa)). The Nucleophile role is filled by Ser-156. A substrate-binding site is contributed by Arg-226. Residues Asp-321 and His-354 contribute to the active site. Asp-355 serves as a coordination point for substrate.

Belongs to the AB hydrolase superfamily. MetX family. As to quaternary structure, homodimer.

Its subcellular location is the cytoplasm. It catalyses the reaction L-homoserine + succinyl-CoA = O-succinyl-L-homoserine + CoA. The protein operates within amino-acid biosynthesis; L-methionine biosynthesis via de novo pathway; O-succinyl-L-homoserine from L-homoserine: step 1/1. In terms of biological role, transfers a succinyl group from succinyl-CoA to L-homoserine, forming succinyl-L-homoserine. This is Homoserine O-succinyltransferase from Nitrosomonas europaea (strain ATCC 19718 / CIP 103999 / KCTC 2705 / NBRC 14298).